The chain runs to 1380 residues: MESEPDQSFKDLSWFLQAIKDPQQTFFNLQTLSFSSSGNTTHCQLITESSMNINVTRDNLTSLSQIFIELATSLETQTSLRNLEFEGIFWEIELLQSLGLLLDNTSKIKQLAFRKNRFSEQCLNELSEILKRNRFLKEVMFLESSIGYRGATLLGSALQVNDSLEELQIWEDSIGSKGAEELSRMIEMNSSLKLFSIFDSSPFTATPLISAVLGMNREMEVHMWSGDHKRDRSLKLVEFLPESKTLRIYQIDISGSCRVAAALGMNTTVRSLDMTGAKLNSRWAKEFRWVLEQNKTLREVKLSKTGLKDKAVVYIAAGLFKNKSLQSLYVDGNRFGSVGVEDLLCPLSRFSALQLQANITLRSIVFGGSNTKIGRDGLTAVLKMVTTNETVVHLGIHDDASLGPDDFIHIFKSLQKNASLRRFSLQGCKGVRGDRVLEAITETLQINPLIEEIDLARTPLQDSGKADEIYQKLGHNGRKIDEAETDDSLKDMPLTEPKSVRAFLCGQNYAGKTTLCNSILQSSSASGFPYVENVRNLMNPVEQVVKTVGGMKIKTFKDEETKISMWNLAGQHEFFALHDLMFPSPCFFLIVLSLFRKPSNKEPKTPAEVEEELEYWLRFIVSNSRKAIQQCMKPNVTIVLTHSEKINLQSESFQATVGCIQRLRDKFQALVEFYPTVFTVDARSSPSVSKLTHHIRMTSKAILQRVPRVYQLCNDIVQLLSDWRSENSNKPIMRWKAFADLCQFKVPSLRIKSRNENIQIVETRRHAIATCLHQMGEVIYFDDLGFLILDYEWFCGEVLTQLIKLDVRKQSTGERNGFVSRKELEKTLRSSLQSPIPGMTSKVLEHFDACDLVKMMKKVELCYEQDPSSPDSSLLVPSILEEGRGKTQKWQINTHDCVYSGRHLQCDDSSHMFLTAGFFPRLQVHLHNRIMELKNQHGATYSLEKYLIAITIHGINIRVELGGQLGNYIDVLACSSKSLTETLRLIHQLIIPAIQSSCRGVILLEHIIRPQCVQDLTPPRFRQSQFVSLHRLKEALSSVPAETMYDYQHTWDSVLDSGKTVLRAGFDLARNLLSDDDFREVLQRRYHDLHNLAQELQVPTDENPEADNHVPVTNELEKVDPSFGGIAKGVEAVLQRLKIIEQEIRDLKQEIQGLRYYEHRLLIQLHHKVNYLVNYNVQMDERKVPNMFYFIRAENYGRRLITSMVPGMVALRIHMLCEFRREMHVVEDQLGCDVMQIDNQAVKCLAPYMTNFMKLVTFALRIGANWAAGMGHMIPDLSHTIAHLANPAVMTGAAGAAGAIGVAAALGRNRGRDRDIQEQEQRAAQQWLIDYLREQTCSTGRDIAEKFGLWRVRYRDDGSIAWICKRHMITRAHEVIQVPL.

10 LRR repeats span residues 26–46, 47–70, 105–132, 161–184, 266–289, 299–322, 323–346, 348–371, 446–472, and 476–502; these read FFNL…CQLI, TESS…FIEL, TSKI…ILKR, NDSL…ELSR, NTTV…EFRW, EVKL…LFKN, KSLQ…LLCP, SRFS…GSNT, INPL…IYQK, and NGRK…SVRA. The Roc domain occupies 493-702; it reads PLTEPKSVRA…HHIRMTSKAI (210 aa). Residues 506-513 and 567-571 each bind GTP; these read GQNYAGKT and NLAGQ. A helical membrane pass occupies residues 574-594; it reads FFALHDLMFPSPCFFLIVLSL. LRR repeat units lie at residues 640–665, 688–712, 799–826, 1023–1046, 1131–1154, and 1229–1254; these read LTHS…RLRD, VSKL…VYQL, LTQL…ELEK, QSQF…TMYD, EAVL…IQGL, and QLGC…NFMK. 641 to 644 contacts GTP; that stretch reads THSE. Residues 757–931 enclose the COR domain; sequence NIQIVETRRH…LQVHLHNRIM (175 aa). Helical transmembrane passes span 1255–1275 and 1287–1307; these read LVTF…HMIP and PAVM…AALG.

As to expression, expressed in seedlings, roots, leaves, stems and flowers. Present in ovules, prominently in nucellus and integuments.

The protein resides in the membrane. Its function is as follows. Involved in the basipetal transport of auxin (IAA) that modulates growth and organs organization. Required for initial divisions in the epidermal/lateral root cap leading to the formation of epidermal cells and a clone of lateral root cap cells, as well as for the maintenance of the radial pattern of cell specification in the root, thus regulating the distinction between the lateral root cap and epidermis. The sequence is that of Protein TORNADO 1 (TRN1) from Arabidopsis thaliana (Mouse-ear cress).